The chain runs to 513 residues: cAMP-regulated M3R protein (513 aa).

It to D.discoideum protein M3L.

The protein is cAMP-regulated M3R protein (prtB) of Dictyostelium discoideum (Social amoeba).